The primary structure comprises 721 residues: Polyribonucleotide nucleotidyltransferase (721 aa).

Residues D490 and D496 each coordinate Mg(2+). Residues 557–618 (PRILTLKINP…EAVRQKIEGL (62 aa)) enclose the KH domain. Residues 625 to 693 (GEEYEGTVVK…DRGKIDLIRP (69 aa)) enclose the S1 motif domain. Residues 696-721 (EGKIAPREPRAARAGGDRGGRPPRRE) form a disordered region.

This sequence belongs to the polyribonucleotide nucleotidyltransferase family. The cofactor is Mg(2+).

The protein localises to the cytoplasm. It carries out the reaction RNA(n+1) + phosphate = RNA(n) + a ribonucleoside 5'-diphosphate. Its function is as follows. Involved in mRNA degradation. Catalyzes the phosphorolysis of single-stranded polyribonucleotides processively in the 3'- to 5'-direction. This is Polyribonucleotide nucleotidyltransferase from Deinococcus geothermalis (strain DSM 11300 / CIP 105573 / AG-3a).